Reading from the N-terminus, the 161-residue chain is Large ribosomal subunit protein uL15 (161 aa).

A disordered region spans residues 1–43 (MKLSDIADNAGSRKKRMRIGRGIGSGKGKTGGRGGKGQTARSG). Residues 21 to 37 (RGIGSGKGKTGGRGGKG) are compositionally biased toward gly residues.

This sequence belongs to the universal ribosomal protein uL15 family. In terms of assembly, part of the 50S ribosomal subunit.

Binds to the 23S rRNA. The protein is Large ribosomal subunit protein uL15 of Nitrobacter hamburgensis (strain DSM 10229 / NCIMB 13809 / X14).